The chain runs to 306 residues: tRNA (guanine-N(1)-)-methyltransferase (306 aa).

Residues G157 and 182–187 (IGDYVL) contribute to the S-adenosyl-L-methionine site.

The protein belongs to the RNA methyltransferase TrmD family. As to quaternary structure, homodimer.

It localises to the cytoplasm. The catalysed reaction is guanosine(37) in tRNA + S-adenosyl-L-methionine = N(1)-methylguanosine(37) in tRNA + S-adenosyl-L-homocysteine + H(+). Specifically methylates guanosine-37 in various tRNAs. This Bifidobacterium adolescentis (strain ATCC 15703 / DSM 20083 / NCTC 11814 / E194a) protein is tRNA (guanine-N(1)-)-methyltransferase.